A 159-amino-acid chain; its full sequence is Phosphopantetheine adenylyltransferase (159 aa).

S8 is a binding site for substrate. ATP-binding positions include 8–9 (SF) and H16. Positions 40, 72, and 86 each coordinate substrate. ATP-binding positions include 87–89 (GVR), E97, and 122–128 (YAALRSS).

The protein belongs to the bacterial CoaD family. Homohexamer. Mg(2+) serves as cofactor.

The protein localises to the cytoplasm. It carries out the reaction (R)-4'-phosphopantetheine + ATP + H(+) = 3'-dephospho-CoA + diphosphate. The protein operates within cofactor biosynthesis; coenzyme A biosynthesis; CoA from (R)-pantothenate: step 4/5. Its function is as follows. Reversibly transfers an adenylyl group from ATP to 4'-phosphopantetheine, yielding dephospho-CoA (dPCoA) and pyrophosphate. The sequence is that of Phosphopantetheine adenylyltransferase from Treponema pallidum (strain Nichols).